The chain runs to 135 residues: Histone H2B.4 (135 aa).

Basic and acidic residues-rich tracts occupy residues 1-12 (MAPKAAEKKPVE) and 23-35 (EKKV…GGEK). A disordered region spans residues 1–43 (MAPKAAEKKPVEKTPAVKKPKAEKKVPTSKEGGEKKGKKKSKK). An N6-acetyllysine mark is found at Lys8 and Lys24. Lys131 is covalently cross-linked (Glycyl lysine isopeptide (Lys-Gly) (interchain with G-Cter in ubiquitin)).

Belongs to the histone H2B family. As to quaternary structure, the nucleosome is a histone octamer containing two molecules each of H2A, H2B, H3 and H4 assembled in one H3-H4 heterotetramer and two H2A-H2B heterodimers. The octamer wraps approximately 147 bp of DNA. In terms of processing, can be acetylated to form H2BK6ac and H2BK33ac. Monoubiquitinated to form H2BK143ub1; may give a specific tag for epigenetic transcriptional activation. In terms of tissue distribution, expressed preferentially in meristematic tissues.

The protein localises to the nucleus. It localises to the chromosome. Functionally, core component of nucleosome. Nucleosomes wrap and compact DNA into chromatin, limiting DNA accessibility to the cellular machineries which require DNA as a template. Histones thereby play a central role in transcription regulation, DNA repair, DNA replication and chromosomal stability. DNA accessibility is regulated via a complex set of post-translational modifications of histones, also called histone code, and nucleosome remodeling. The protein is Histone H2B.4 (TH153) of Triticum aestivum (Wheat).